We begin with the raw amino-acid sequence, 942 residues long: Protein inturned (942 aa).

Disordered stretches follow at residues 1-56 and 128-156; these read MAGL…PEWL and LPRR…KTGV. Over residues 22–32 the composition is skewed to acidic residues; it reads SQEEEEEEGDS. Over residues 33-48 the composition is skewed to low complexity; it reads DAGASSLGSYSSASSD. A compositionally biased stretch (polar residues) spans 137–156; the sequence is SSNNGPVSILKHQSSQKTGV. In terms of domain architecture, PDZ spans 185–267; it reads LLEVLVGIIH…PMQVKLTFEN (83 aa). Residues Ser674 and Ser678 each carry the phosphoserine modification. The tract at residues 707-751 is disordered; that stretch reads KARKPSPSRIGGGREPTEGEESAGLSPHATPDAVRKQRESEGSDD.

It belongs to the inturned family. In terms of assembly, component of the CPLANE (ciliogenesis and planar polarity effectors) complex, composed of INTU, FUZ and WDPCP. Interacts with CPLANE1. Interacts with NPHP4 and DAAM1; INTU is mediating the interaction between NPHP4 and DAAM1. Widely expressed in E8.5 and E9.5 wild type embryos. Present in various adult organs (at protein level).

The protein resides in the cytoplasm. The protein localises to the cell surface. It localises to the cytoskeleton. It is found in the cilium basal body. Its subcellular location is the microtubule organizing center. The protein resides in the centrosome. The protein localises to the centriole. In terms of biological role, plays a key role in ciliogenesis and embryonic development. Regulator of cilia formation by controlling the organization of the apical actin cytoskeleton and the positioning of the basal bodies at the apical cell surface, which in turn is essential for the normal orientation of elongating ciliary microtubules. Plays a key role in definition of cell polarity via its role in ciliogenesis but not via conversion extension. Has an indirect effect on hedgehog signaling. Proposed to function as core component of the CPLANE (ciliogenesis and planar polarity effectors) complex involved in the recruitment of peripheral IFT-A proteins to basal bodies. Required for recruitment of CPLANE2 to the mother centriole. Binds phosphatidylinositol 3-phosphate with highest affinity, followed by phosphatidylinositol 4-phosphate and phosphatidylinositol 5-phosphate. In Mus musculus (Mouse), this protein is Protein inturned (Intu).